The primary structure comprises 196 residues: Orotate phosphoribosyltransferase (196 aa).

A 5-phospho-alpha-D-ribose 1-diphosphate-binding site is contributed by 117-125 (EDIVTTGLS). The orotate site is built by Thr121 and Arg149.

Belongs to the purine/pyrimidine phosphoribosyltransferase family. PyrE subfamily. Homodimer. Mg(2+) is required as a cofactor.

It carries out the reaction orotidine 5'-phosphate + diphosphate = orotate + 5-phospho-alpha-D-ribose 1-diphosphate. Its pathway is pyrimidine metabolism; UMP biosynthesis via de novo pathway; UMP from orotate: step 1/2. Functionally, catalyzes the transfer of a ribosyl phosphate group from 5-phosphoribose 1-diphosphate to orotate, leading to the formation of orotidine monophosphate (OMP). In Methylorubrum populi (strain ATCC BAA-705 / NCIMB 13946 / BJ001) (Methylobacterium populi), this protein is Orotate phosphoribosyltransferase.